The primary structure comprises 181 residues: NADH-quinone oxidoreductase subunit I (181 aa).

4Fe-4S ferredoxin-type domains lie at 51-80 (TRNSNGSERCVACNLCSAVCPVNCISLKKS) and 90-119 (KSFQINLSRCIFCGLCEEACPTMAIQLTPD). C60, C63, C66, C70, C99, C102, C105, and C109 together coordinate [4Fe-4S] cluster.

This sequence belongs to the complex I 23 kDa subunit family. In terms of assembly, NDH-1 is composed of 13 different subunits. Subunits NuoA, H, J, K, L, M, N constitute the membrane sector of the complex. Requires [4Fe-4S] cluster as cofactor.

Its subcellular location is the cell membrane. The enzyme catalyses a quinone + NADH + 5 H(+)(in) = a quinol + NAD(+) + 4 H(+)(out). Functionally, NDH-1 shuttles electrons from NADH, via FMN and iron-sulfur (Fe-S) centers, to quinones in the respiratory chain. The immediate electron acceptor for the enzyme in this species is believed to be ubiquinone. Couples the redox reaction to proton translocation (for every two electrons transferred, four hydrogen ions are translocated across the cytoplasmic membrane), and thus conserves the redox energy in a proton gradient. The protein is NADH-quinone oxidoreductase subunit I of Buchnera aphidicola subsp. Cinara cedri (strain Cc).